A 142-amino-acid chain; its full sequence is Large ribosomal subunit protein uL11 (142 aa).

It belongs to the universal ribosomal protein uL11 family. As to quaternary structure, part of the ribosomal stalk of the 50S ribosomal subunit. Interacts with L10 and the large rRNA to form the base of the stalk. L10 forms an elongated spine to which L12 dimers bind in a sequential fashion forming a multimeric L10(L12)X complex. Post-translationally, one or more lysine residues are methylated.

Forms part of the ribosomal stalk which helps the ribosome interact with GTP-bound translation factors. In Acinetobacter baumannii (strain AB307-0294), this protein is Large ribosomal subunit protein uL11.